Here is a 546-residue protein sequence, read N- to C-terminus: Chaperonin GroEL (546 aa).

ATP-binding positions include 30-33, K51, 87-91, G415, and D495; these read TLGP and DGTTT.

It belongs to the chaperonin (HSP60) family. In terms of assembly, forms a cylinder of 14 subunits composed of two heptameric rings stacked back-to-back. Interacts with the co-chaperonin GroES.

Its subcellular location is the cytoplasm. The catalysed reaction is ATP + H2O + a folded polypeptide = ADP + phosphate + an unfolded polypeptide.. Its function is as follows. Together with its co-chaperonin GroES, plays an essential role in assisting protein folding. The GroEL-GroES system forms a nano-cage that allows encapsulation of the non-native substrate proteins and provides a physical environment optimized to promote and accelerate protein folding. The protein is Chaperonin GroEL of Brucella ovis (strain ATCC 25840 / 63/290 / NCTC 10512).